A 197-amino-acid chain; its full sequence is Rac-like GTP-binding protein ARAC1 (197 aa).

13 to 20 (GDGAVGKT) is a GTP binding site. The short motif at 35–43 (YVPTVFDNF) is the Effector region element. GTP contacts are provided by residues 60–64 (DTAGQ) and 118–121 (TKLD). C194 is modified (cysteine methyl ester). Residue C194 is the site of S-geranylgeranyl cysteine attachment. The propeptide at 195–197 (SIL) is removed in mature form.

Belongs to the small GTPase superfamily. Rho family. In terms of assembly, interacts with SPK1. In terms of tissue distribution, ubiquitous.

It localises to the cytoplasm. It is found in the membrane. Its function is as follows. Inactive GDP-bound Rho GTPases reside in the cytosol, are found in a complex with Rho GDP-dissociation inhibitors (Rho GDIs), and are released from the GDI protein in order to translocate to membranes upon activation. This Arabidopsis thaliana (Mouse-ear cress) protein is Rac-like GTP-binding protein ARAC1 (ARAC1).